The chain runs to 364 residues: MSHCTIFLYKYFPGKPRYQHCSFLHPLNHKLKSLFLPITGSRFLSNSTFSVSDSAHSHQAKPHVRNAQFDFKAYMLEKITAVNQALDAALPVREPVKIHEAMRYSLLLGGKRICPIVCLAACHLVGGDESTAMPSAAALEMIHAMSLMHDDLPCMDNDDLRRGRPSNHVVFGEGATVLAGYALIARAFEHIATATQGVGPGKILRVIGELAQLIGAEGVVGGQVVDLRCGGEGQMAIGLEQLEYIHLHKTAASVEASAVAGAVLGGASEEEIERLRKYSRSAGLLFQVVDDILDVTKSSEELGKTAGKDLAAGKTTYPKLLGMEKSREMAEKLKREAQEQLLGFDPIKAAPLIALVDFIAYRDK.

The N-terminal 51 residues, 1 to 51, are a transit peptide targeting the chloroplast; that stretch reads MSHCTIFLYKYFPGKPRYQHCSFLHPLNHKLKSLFLPITGSRFLSNSTFSV. Isopentenyl diphosphate contacts are provided by K72, K111, and H143. D150 and D156 together coordinate Mg(2+). R161 is a binding site for dimethylallyl diphosphate. R162 serves as a coordination point for isopentenyl diphosphate. Residues K249, T250, Q287, D294, K304, and K314 each contribute to the dimethylallyl diphosphate site.

It belongs to the FPP/GGPP synthase family. In terms of assembly, monomer. Requires Mg(2+) as cofactor. Strongly expressed in glandular trichomes, and, at low levels, in leaves, stems and flowers.

It localises to the plastid. Its subcellular location is the chloroplast. It catalyses the reaction isopentenyl diphosphate + (2E,6E,10E)-geranylgeranyl diphosphate = (2E,6E,10E,14E)-geranylfarnesyl diphosphate + diphosphate. It carries out the reaction 2 isopentenyl diphosphate + (2E,6E)-farnesyl diphosphate = (2E,6E,10E,14E)-geranylfarnesyl diphosphate + 2 diphosphate. The enzyme catalyses 3 isopentenyl diphosphate + (2E)-geranyl diphosphate = (2E,6E,10E,14E)-geranylfarnesyl diphosphate + 3 diphosphate. The catalysed reaction is 4 isopentenyl diphosphate + dimethylallyl diphosphate = (2E,6E,10E,14E)-geranylfarnesyl diphosphate + 4 diphosphate. Its pathway is secondary metabolite biosynthesis; terpenoid biosynthesis. The protein operates within isoprenoid biosynthesis. Functionally, involved in the biosynthesis of leucosceptrane sesterterpenoids natural products, which are playing defensive roles toward herbivorus insects (e.g. Spodoptera exigua). Catalyzes the condensation of isopentenyl pyrophosphate (IDP) with the allylic pyrophosphates to yield geranylfarnesyl diphosphate (GFDP), the C(25) prenyl diphosphate precursor to all sesterterpenoids. Geranylgeranyl diphosphate (GGPP) is the preferred substrate, however dimethylallyl diphosphate (DMADP), farnesyl diphosphate (FDP) and geranyl diphosphate (GDP) can also be used as allylic substrate. The protein is Geranylfarnesyl diphosphate synthase, chloroplastic of Leucosceptrum canum (Hairy white-wand).